A 141-amino-acid polypeptide reads, in one-letter code: Putative pre-16S rRNA nuclease (141 aa).

The protein belongs to the YqgF nuclease family.

It localises to the cytoplasm. Functionally, could be a nuclease involved in processing of the 5'-end of pre-16S rRNA. The sequence is that of Putative pre-16S rRNA nuclease from Cupriavidus necator (strain ATCC 17699 / DSM 428 / KCTC 22496 / NCIMB 10442 / H16 / Stanier 337) (Ralstonia eutropha).